Consider the following 389-residue polypeptide: S-adenosylmethionine synthase (389 aa).

His17 lines the ATP pocket. Residue Asp19 participates in Mg(2+) binding. Residue Glu45 participates in K(+) binding. Residues Glu58 and Gln101 each coordinate L-methionine. The flexible loop stretch occupies residues Gln101–Gly111. ATP-binding positions include Asp170–Lys172, Arg237–Phe238, Asp246, Arg252–Lys253, Ala269, and Lys273. Position 246 (Asp246) interacts with L-methionine. Residue Lys277 participates in L-methionine binding.

It belongs to the AdoMet synthase family. Homotetramer; dimer of dimers. It depends on Mg(2+) as a cofactor. The cofactor is K(+).

The protein resides in the cytoplasm. The enzyme catalyses L-methionine + ATP + H2O = S-adenosyl-L-methionine + phosphate + diphosphate. It participates in amino-acid biosynthesis; S-adenosyl-L-methionine biosynthesis; S-adenosyl-L-methionine from L-methionine: step 1/1. Its function is as follows. Catalyzes the formation of S-adenosylmethionine (AdoMet) from methionine and ATP. The overall synthetic reaction is composed of two sequential steps, AdoMet formation and the subsequent tripolyphosphate hydrolysis which occurs prior to release of AdoMet from the enzyme. This is S-adenosylmethionine synthase from Treponema denticola (strain ATCC 35405 / DSM 14222 / CIP 103919 / JCM 8153 / KCTC 15104).